We begin with the raw amino-acid sequence, 116 residues long: Peptidyl-tRNA hydrolase (116 aa).

The protein belongs to the PTH2 family.

Its subcellular location is the cytoplasm. It carries out the reaction an N-acyl-L-alpha-aminoacyl-tRNA + H2O = an N-acyl-L-amino acid + a tRNA + H(+). Its function is as follows. The natural substrate for this enzyme may be peptidyl-tRNAs which drop off the ribosome during protein synthesis. The chain is Peptidyl-tRNA hydrolase from Methanopyrus kandleri (strain AV19 / DSM 6324 / JCM 9639 / NBRC 100938).